Reading from the N-terminus, the 252-residue chain is Probable transcriptional regulatory protein RT0442 (252 aa).

The disordered stretch occupies residues 1–22 (MSGHSKFKNIQHRKGAQDKKKS).

Belongs to the TACO1 family.

It is found in the cytoplasm. The protein is Probable transcriptional regulatory protein RT0442 of Rickettsia typhi (strain ATCC VR-144 / Wilmington).